The following is a 152-amino-acid chain: 3-hydroxyacyl-[acyl-carrier-protein] dehydratase FabZ (152 aa).

Residue H54 is part of the active site.

This sequence belongs to the thioester dehydratase family. FabZ subfamily.

It localises to the cytoplasm. It catalyses the reaction a (3R)-hydroxyacyl-[ACP] = a (2E)-enoyl-[ACP] + H2O. Its function is as follows. Involved in unsaturated fatty acids biosynthesis. Catalyzes the dehydration of short chain beta-hydroxyacyl-ACPs and long chain saturated and unsaturated beta-hydroxyacyl-ACPs. This chain is 3-hydroxyacyl-[acyl-carrier-protein] dehydratase FabZ, found in Shewanella woodyi (strain ATCC 51908 / MS32).